Here is a 385-residue protein sequence, read N- to C-terminus: Phosphotransferase FrzJ (385 aa).

ATP-binding residues include N38 and K59. D245 is an active-site residue.

It belongs to the methylthioribose kinase family. Monomer.

The catalysed reaction is (1S,3S,6S,7S,8S,9S)-6-[(4-methoxyphenyl)methyl]-3-(methylamino)-5-azatricyclo[6.3.1.0(1,5)]dodecane-7,9-diol + ATP = (-)-FR901483 + ADP + 2 H(+). It functions in the pathway secondary metabolite biosynthesis. Functionally, phosphotransferase; part of the gene cluster that mediates the biosynthesis of the alkaloid (-)-FR901483, a potent immunosuppressant that shows efficacy in animal models and a probable inhibitor of purine nucleotide biosynthesis by targeting phosphoribosylpyrophosphate amidotransferase (PPAT). FrzJ catalyzes the last step of the pathway by phosphorylating the C4'-OH of dephospho-(-)-FR901483 to produce (-)-FR901483. The biosynthesis of (-)-FR901483 starts with the condensation of two L-tyrosines to yield (S,S)-dityrosyl-piperazine. This process occurs in 3 steps with the non-canonical nonribosomal peptide synthetase FrzA catalyzing the reduction of L-tyrosine into L-tyrosinal, the spontaneous condensation of 2 L-tyrosinal units, and the subsequent reduction by the NmrA-like family domain-containing oxidoreductase FrzB. The cytochrome P450 monooxygenase FrzC then performs coupling between N10 and C1' to morph the piperazine into a 1,4-diazabicyclo[3.2.1]octane spiro-fused to a 2,5-cyclohexadienone. The dienone portion is further reduced to cyclohexanone by the flavin-dependent reductase FrzD. The methyltranserases (MTs) FrzE and FrzF are then involved in the methylation at the C10' amine and the C4 phenolic oxygen, respectively. The order of the two MTs appear to be interchangeable. Cleavage of the C9-N10' bond by the dioxygenase FrzG then leads to formation of a conjugated iminium. In addition to the oxidation of C9, an additional dehydrogenation between C7 and C8 can occur to give a likely shunt product. The next biosynthetic step is the intramolecular aldol condensation catalyzed by the newly identified aldolase FrzH to yield an aza-tricyclic product with the formation of a C9-C3' bond. The short-chain dehydrogenase/reductase FrzI then produces dephospho-(-)-FR901483 that is phosphorylated at C4'-OH into (-)-FR901483 by the phosphotransferase FrzJ. The chain is Phosphotransferase FrzJ from Cladobotryum sp.